Reading from the N-terminus, the 276-residue chain is Zinc transporter ZTP29 (276 aa).

Topologically, residues 1–6 (MDSQML) are cytoplasmic. A helical transmembrane segment spans residues 7–27 (VALGLSLVGGLSTSLGALFVV). At 28–35 (LSETPNMK) the chain is on the lumenal side. Residues 36 to 56 (MLGLLQGFASGLMLSISFLDL) traverse the membrane as a helical segment. At 57 to 63 (AHNAINS) the chain is on the cytoplasmic side. A helical transmembrane segment spans residues 64–84 (IGFFKANLWFFGGVIFFACIT). Topologically, residues 85-123 (KFIPEPTLGPSTDGKRRKKNGDEGGKDMMKKHRKQVLYS) are lumenal. Residues 124–144 (GLITAIGISLHNFPEGMAVFL) traverse the membrane as a helical segment. Over 145–156 (GSIKGMRVGVNL) the chain is Cytoplasmic. The chain crosses the membrane as a helical span at residues 157–177 (ALAIALHNIPEGVAVALPIYF). The Lumenal segment spans residues 178–187 (ATESKWQAFK). A helical transmembrane segment spans residues 188 to 208 (LATLSGLAEPLGVIIVAYLFP). Topologically, residues 209–219 (RSLSPEILEGL) are cytoplasmic. The helical transmembrane segment at 220–240 (LGAVGGIMAFLTLHEMLPLAF) threads the bilayer. At 241-250 (DYAGQKQAVK) the chain is on the lumenal side. A helical membrane pass occupies residues 251 to 271 (AVFFGMACMSASLYFLELSLP). Topologically, residues 272–276 (ETMSL) are cytoplasmic.

This sequence belongs to the ZIP transporter (TC 2.A.5) family. ZupT subfamily. Expressed in hypocotyls, cotyledons, leaves and anthers.

It is found in the endoplasmic reticulum membrane. In terms of biological role, zinc transporter involved response to salt stress. May act through the regulation of zinc levels required to induce the unfolded protein response (UPR) pathway. This chain is Zinc transporter ZTP29 (ZTP29), found in Arabidopsis thaliana (Mouse-ear cress).